Reading from the N-terminus, the 218-residue chain is MLKMSGSYAPVEDSADELSVHSGNDNEIDLEKGLLPKCNTGNGGTTPCSEPPHYDSDAVVEMDMYENNIYMQTFKLRPFPKSGVTNFSNVVFQMKTYENNRHMQTFRLRPFAKNGVTNGVKLAQVLFLLLPFNFIFIACLFFRKASFTDFSLMGWILFGIWCLTCFLSSFILYAYHESWTKFARERPDDFAGILILLLFPGIVTMIVFYGIYMNSIYG.

The segment at 1 to 23 is disordered; it reads MLKMSGSYAPVEDSADELSVHSG. The next 3 helical transmembrane spans lie at 122-142, 152-172, and 191-211; these read LAQV…CLFF, LMGW…SFIL, and AGIL…FYGI.

The protein belongs to the WTF family.

The protein localises to the spore membrane. Functionally, may act in meiotic drive. This is Wtf element wtf7 from Schizosaccharomyces kambucha (Fission yeast).